We begin with the raw amino-acid sequence, 580 residues long: D-erythrulose kinase (580 aa).

A DhaK domain is found at 7 to 327 (DPARFTEDML…WAAPADTPAY (321 aa)). Catalysis depends on H217, which acts as the Tele-hemiaminal-histidine intermediate. Residues 329–360 (KGAAQQHVSGERRSEATARSASSGPKLAELSD) are disordered. A DhaL domain is found at 368–570 (RLVARAFDAM…LALCARTVAD (203 aa)). Residues 397-403 (DGDHGRG), 443-444 (TS), G485, R542, and 555-557 (DAG) each bind ATP.

The catalysed reaction is D-erythrulose + ATP = D-erythrulose 4-phosphate + ADP + H(+). Its pathway is carbohydrate metabolism; erythritol degradation. It participates in carbohydrate metabolism; D-threitol degradation. Catalyzes the phosphorylation of D-erythrulose to D-erythrulose-4P. Involved in the degradation pathways of erythritol and D-threitol, that allow M.smegmatis to grow on these compounds as the sole carbon source. The sequence is that of D-erythrulose kinase from Mycolicibacterium smegmatis (strain ATCC 700084 / mc(2)155) (Mycobacterium smegmatis).